The sequence spans 418 residues: Tyrosine--tRNA ligase (418 aa).

Residue Y34 coordinates L-tyrosine. Positions 39-48 (PTADSLHLGH) match the 'HIGH' region motif. Residues Y169 and Q173 each coordinate L-tyrosine. Positions 229–233 (KFGKS) match the 'KMSKS' region motif. K232 serves as a coordination point for ATP. The S4 RNA-binding domain occupies 352–418 (NNIVELLVSS…GKKKYFVLTY (67 aa)).

It belongs to the class-I aminoacyl-tRNA synthetase family. TyrS type 1 subfamily. Homodimer.

The protein resides in the cytoplasm. It catalyses the reaction tRNA(Tyr) + L-tyrosine + ATP = L-tyrosyl-tRNA(Tyr) + AMP + diphosphate + H(+). Its function is as follows. Catalyzes the attachment of tyrosine to tRNA(Tyr) in a two-step reaction: tyrosine is first activated by ATP to form Tyr-AMP and then transferred to the acceptor end of tRNA(Tyr). In Streptococcus pneumoniae serotype 19F (strain G54), this protein is Tyrosine--tRNA ligase.